Here is a 636-residue protein sequence, read N- to C-terminus: Transcriptional repressor CTCFL (636 aa).

Disordered stretches follow at residues 17–38, 160–195, and 222–257; these read KEQK…VQRV, ENPE…DKRE, and LEEQ…PQSF. Over residues 160–170 the composition is skewed to acidic residues; sequence ENPELTPDLDE. Basic residues predominate over residues 242-251; it reads AKPKRRRQTK. C2H2-type zinc fingers lie at residues 257–279, 285–307, 313–336, 342–364, 370–392, 398–421, 428–451, 458–480, 486–508, 514–537, and 546–572; these read FQCD…IKIH, HLCH…VNTH, HKCR…RYKH, FKCS…IRSH, FQCC…MRTH, YECP…AQKH, YECP…RNLH, MKCR…QRTH, FKCK…MRMH, FSCL…RKYH, and HLCL…DPEH. Positions 562–624 are disordered; the sequence is QRHRKKCDPE…AAGSQSPDHG (63 aa). The span at 568–583 shows a compositional bias: basic and acidic residues; the sequence is CDPEHETLAPNKDRRP.

The protein belongs to the CTCF zinc-finger protein family. As to quaternary structure, interacts with histones, PRMT7 and SETD1A. Interacts (via N-terminus) with BAG6/BAT3. As to expression, testis-specific.

The protein localises to the cytoplasm. It is found in the nucleus. In terms of biological role, testis-specific DNA binding protein responsible for insulator function, nuclear architecture and transcriptional control, which probably acts by recruiting epigenetic chromatin modifiers. Plays a key role in gene imprinting in male germline, by participating in the establishment of differential methylation at the IGF2/H19 imprinted control region (ICR). Directly binds the unmethylated H19 ICR and recruits the PRMT7 methyltransferase, leading to methylate histone H4 'Arg-3' to form H4R3sme2. This probably leads to recruit de novo DNA methyltransferases at these sites. Seems to act as tumor suppressor. In association with DNMT1 and DNMT3B, involved in activation of BAG1 gene expression by binding to its promoter. Required for dimethylation of H3 lysine 4 (H3K4me2) of MYC and BRCA1 promoters. The chain is Transcriptional repressor CTCFL (Ctcfl) from Mus musculus (Mouse).